A 185-amino-acid polypeptide reads, in one-letter code: dCTP deaminase (185 aa).

107–112 (KSTYAR) is a binding site for dCTP. Residue Glu-133 is the Proton donor/acceptor of the active site. 3 residues coordinate dCTP: Gln-152, Tyr-166, and Gln-176.

This sequence belongs to the dCTP deaminase family. In terms of assembly, homotrimer.

The catalysed reaction is dCTP + H2O + H(+) = dUTP + NH4(+). Its pathway is pyrimidine metabolism; dUMP biosynthesis; dUMP from dCTP (dUTP route): step 1/2. Functionally, catalyzes the deamination of dCTP to dUTP. The chain is dCTP deaminase from Nitratiruptor sp. (strain SB155-2).